The following is a 374-amino-acid chain: MPLFATPFAQLDLVRQPEQDGEPLQAFDAADEYLLNQLHERGVTAQCRVLVLNDAFGALAASLAPHVQVTSSGDSHLGFLALRKNLARNGLDLGSVRFVPASETAVGPFDHVLVKVPKTLALLEEQLIRLHGQLAPGAQVVAAGMVKHLPRAAGDLLERYIGPMHASLAVKKARLLIAEAAERPQPRSPYPTRYRLEQPPLTLLNHANVFCREGLDIGTRAFLPHLPRSLGALRAADLGCGNGVLGIAYALLNPQAELALVDESYMAVQSARENWRAALGERPATFRADDGLAGQAAGSLDLVLCNPPFHQQQVVGDFLAWRMFLQARDALAAGGELWIVGNRHLGYHAKLKRLFRGVEQVAANPKFVILKAGK.

The protein belongs to the methyltransferase superfamily. RlmG family.

The protein localises to the cytoplasm. The enzyme catalyses guanosine(1835) in 23S rRNA + S-adenosyl-L-methionine = N(2)-methylguanosine(1835) in 23S rRNA + S-adenosyl-L-homocysteine + H(+). Its function is as follows. Specifically methylates the guanine in position 1835 (m2G1835) of 23S rRNA. This Pseudomonas aeruginosa (strain ATCC 15692 / DSM 22644 / CIP 104116 / JCM 14847 / LMG 12228 / 1C / PRS 101 / PAO1) protein is Ribosomal RNA large subunit methyltransferase G.